Consider the following 879-residue polypeptide: Phosphoenolpyruvate carboxylase (879 aa).

Active-site residues include His138 and Lys546.

The protein belongs to the PEPCase type 1 family. Mg(2+) serves as cofactor.

The enzyme catalyses oxaloacetate + phosphate = phosphoenolpyruvate + hydrogencarbonate. Functionally, forms oxaloacetate, a four-carbon dicarboxylic acid source for the tricarboxylic acid cycle. The polypeptide is Phosphoenolpyruvate carboxylase (Pectobacterium carotovorum subsp. carotovorum (strain PC1)).